Consider the following 295-residue polypeptide: Caffeine dehydrogenase subunit beta (295 aa).

The FAD-binding PCMH-type domain maps to 1–178 (MKPTAFDYIR…CEIRIPVPSQ (178 aa)). FAD-binding positions include 32-36 (AGGQS) and 111-115 (TLGGN).

In terms of assembly, heterotrimer composed of an alpha (CdhA), a beta (CdhB) and a gamma (CdhC) subunit.

The catalysed reaction is caffeine + a ubiquinone + H2O = 1,3,7-trimethylurate + a ubiquinol. It catalyses the reaction ubiquinone-0 + caffeine + H2O = ubiquinol-0 + 1,3,7-trimethylurate. The enzyme catalyses theobromine + a ubiquinone + H2O = 3,7-dimethylurate + a ubiquinol. In terms of biological role, component of the caffeine dehydrogenase complex that catalyzes the hydrolytical oxidation of 1,3,7-trimethylxanthine (caffeine) by incorporation of an oxygen atom originating from a water molecule into position C-8 to produce 1,3,7-trimethyluric acid (TMU). Coenzyme Q0 (ubiquinone-0) is the preferred electron acceptor and, to a lesser extent, coenzyme Q2 (ubiquinone-2) can also be used, but oxygen and NAD(P)(+) cannot. Is involved in a caffeine degradation pathway that allows Pseudomonas sp. strain CBB1 to grow on caffeine as the sole carbon and nitrogen source. Is also active with theobromine as substrate, but shows a very poor activity with theophylline and is not active with xanthine, 3-methylxanthine, 7-methylxanthine, TMU, and 3,7-dimethylurate. This Pseudomonas sp. (strain CBB1) protein is Caffeine dehydrogenase subunit beta.